A 205-amino-acid chain; its full sequence is High frequency lysogenization protein HflD homolog (205 aa).

This sequence belongs to the HflD family.

The protein localises to the cytoplasm. The protein resides in the cell inner membrane. The polypeptide is High frequency lysogenization protein HflD homolog (Shewanella oneidensis (strain ATCC 700550 / JCM 31522 / CIP 106686 / LMG 19005 / NCIMB 14063 / MR-1)).